Consider the following 98-residue polypeptide: Histone H4-1 (98 aa).

A compositionally biased stretch (gly residues) spans 1 to 14 (MGGKGGKGGKGLGK). A disordered region spans residues 1–20 (MGGKGGKGGKGLGKVGAKKR).

It belongs to the histone H4 family. The nucleosome is a histone octamer containing two molecules each of H2A, H2B, H3 and H4 assembled in one H3-H4 heterotetramer and two H2A-H2B heterodimers. The octamer wraps approximately 147 bp of DNA.

Its subcellular location is the nucleus. It localises to the chromosome. Its function is as follows. Core component of nucleosome. Nucleosomes wrap and compact DNA into chromatin, limiting DNA accessibility to the cellular machineries which require DNA as a template. Histones thereby play a central role in transcription regulation, DNA repair, DNA replication and chromosomal stability. DNA accessibility is regulated via a complex set of post-translational modifications of histones, also called histone code, and nucleosome remodeling. The chain is Histone H4-1 from Blepharisma japonicum.